The primary structure comprises 220 residues: Uracil-DNA glycosylase (220 aa).

Catalysis depends on D65, which acts as the Proton acceptor.

Belongs to the uracil-DNA glycosylase (UDG) superfamily. UNG family.

It is found in the cytoplasm. The catalysed reaction is Hydrolyzes single-stranded DNA or mismatched double-stranded DNA and polynucleotides, releasing free uracil.. In terms of biological role, excises uracil residues from the DNA which can arise as a result of misincorporation of dUMP residues by DNA polymerase or due to deamination of cytosine. This is Uracil-DNA glycosylase from Azobacteroides pseudotrichonymphae genomovar. CFP2.